Here is a 390-residue protein sequence, read N- to C-terminus: 1-deoxy-D-xylulose 5-phosphate reductoisomerase (390 aa).

Positions 10, 11, 12, 13, 36, 38, and 124 each coordinate NADPH. 1-deoxy-D-xylulose 5-phosphate is bound at residue K125. Position 126 (E126) interacts with NADPH. D150 lines the Mn(2+) pocket. 1-deoxy-D-xylulose 5-phosphate is bound by residues S151, E152, S176, and H199. E152 contributes to the Mn(2+) binding site. Position 205 (G205) interacts with NADPH. Positions 212, 217, 218, and 221 each coordinate 1-deoxy-D-xylulose 5-phosphate. E221 provides a ligand contact to Mn(2+).

Belongs to the DXR family. The cofactor is Mg(2+). Mn(2+) serves as cofactor.

It carries out the reaction 2-C-methyl-D-erythritol 4-phosphate + NADP(+) = 1-deoxy-D-xylulose 5-phosphate + NADPH + H(+). It participates in isoprenoid biosynthesis; isopentenyl diphosphate biosynthesis via DXP pathway; isopentenyl diphosphate from 1-deoxy-D-xylulose 5-phosphate: step 1/6. Its function is as follows. Catalyzes the NADPH-dependent rearrangement and reduction of 1-deoxy-D-xylulose-5-phosphate (DXP) to 2-C-methyl-D-erythritol 4-phosphate (MEP). The sequence is that of 1-deoxy-D-xylulose 5-phosphate reductoisomerase from Microcystis aeruginosa (strain NIES-843 / IAM M-2473).